The chain runs to 418 residues: Inner capsid protein sigma-2 (418 aa).

The protein belongs to the orthoreovirus sigma-1 protein family. In terms of assembly, interacts with protein mu-NS; in viral inclusions.

It is found in the virion. Its function is as follows. Inner capsid (core) component. The protein is Inner capsid protein sigma-2 (S2) of Mammalia (T1L).